Consider the following 144-residue polypeptide: uncharacterized protein (144 aa).

A helical transmembrane segment spans residues 25 to 47; the sequence is LTLLDGCCVALVLALTAWSGFFV.

It is found in the membrane. This is an uncharacterized protein from Treponema pallidum (strain Nichols).